The following is a 79-amino-acid chain: RNA-binding protein Hfq (79 aa).

A Sm domain is found at 10–70 (DAFLNHVRKT…ISTIMPAQPI (61 aa)).

This sequence belongs to the Hfq family. As to quaternary structure, homohexamer.

Its function is as follows. RNA chaperone that binds small regulatory RNA (sRNAs) and mRNAs to facilitate mRNA translational regulation in response to envelope stress, environmental stress and changes in metabolite concentrations. Also binds with high specificity to tRNAs. The chain is RNA-binding protein Hfq from Ruegeria pomeroyi (strain ATCC 700808 / DSM 15171 / DSS-3) (Silicibacter pomeroyi).